We begin with the raw amino-acid sequence, 408 residues long: MVQVNSNYLKLKAGYLFPEISRRVNAFCELNPTASLIRLGIGDVTEPLPQACCKAMKTAIEEMGSTSGFRGYGPEQGYLWLREAIAKNDFQSRGCQISADEIFVSDGSKCDSSNILDILGTGNKIAVTDPVYPVYVDSNVMAGQTGIAASSGHYEGLVYIPLNAENGFEAELPSEPVDLIYLCFPNNPTGAVASKVQLTKWVEYAKKNHALILFDAAYESFIQDPLLPHSIFEIDGATDCAIEFRSFSKNAGFTGTRCAFTVIPKSLKGKTLDGAEVDFWSLWNRRQSTKFNGVSYIVQRGAEAVYSLEGQSQTNKLVSFYMKNAEIIRKQLTLAGYKIYGGKHAPYVWLEAPTEMDSWQFFDHLLNKANIVGTPGSGFGVAGEGYFRLSAFNSRSNVEEAMRRITSI.

The substrate site is built by tyrosine 15 and glycine 42. Residues tyrosine 72, serine 108–lysine 109, tyrosine 132, asparagine 187, tyrosine 218, and serine 246–serine 248 contribute to the pyridoxal 5'-phosphate site. Substrate contacts are provided by lysine 109, tyrosine 132, and asparagine 187. Position 249 is an N6-(pyridoxal phosphate)lysine (lysine 249). Arginine 257 and asparagine 292 together coordinate pyridoxal 5'-phosphate. 2 residues coordinate substrate: asparagine 292 and arginine 388.

The protein belongs to the class-I pyridoxal-phosphate-dependent aminotransferase family. LL-diaminopimelate aminotransferase subfamily. As to quaternary structure, homodimer. Pyridoxal 5'-phosphate serves as cofactor.

The enzyme catalyses (2S,6S)-2,6-diaminopimelate + 2-oxoglutarate = (S)-2,3,4,5-tetrahydrodipicolinate + L-glutamate + H2O + H(+). The protein operates within amino-acid biosynthesis; L-lysine biosynthesis via DAP pathway; LL-2,6-diaminopimelate from (S)-tetrahydrodipicolinate (aminotransferase route): step 1/1. Involved in the synthesis of meso-diaminopimelate (m-DAP or DL-DAP), required for both lysine and peptidoglycan biosynthesis. Catalyzes the direct conversion of tetrahydrodipicolinate to LL-diaminopimelate. This chain is LL-diaminopimelate aminotransferase, found in Prochlorococcus marinus (strain SARG / CCMP1375 / SS120).